Consider the following 883-residue polypeptide: Bifunctional heparan sulfate N-deacetylase/N-sulfotransferase 2 (883 aa).

The Cytoplasmic portion of the chain corresponds to 1 to 18 (MLQLWKVVRPARQLELHR). Residues 19–39 (LILLLIGFSLVSMGFLAYYVS) traverse the membrane as a helical; Signal-anchor for type II membrane protein segment. Over 40 to 883 (TSPKAKEPLP…REELQHSSVG (844 aa)) the chain is Lumenal. Residues 41-597 (SPKAKEPLPL…KRHKDIWSKE (557 aa)) form a heparan sulfate N-deacetylase 2 region. The segment at 49–82 (PLPLGDCSSSGAAGPGPARPPVPPRPQRPPETTR) is disordered. Positions 65–77 (PARPPVPPRPQRP) are enriched in pro residues. N-linked (GlcNAc...) asparagine glycans are attached at residues asparagine 233, asparagine 350, and asparagine 400. Residues 598–883 (KTCDRLPKFL…REELQHSSVG (286 aa)) form a heparan sulfate N-sulfotransferase 2 region. Lysine 613 (for sulfotransferase activity) is an active-site residue. Residue 613–617 (KTGTT) participates in 3'-phosphoadenylyl sulfate binding. An N-linked (GlcNAc...) asparagine glycan is attached at asparagine 666. Serine 711 serves as a coordination point for 3'-phosphoadenylyl sulfate. 2 N-linked (GlcNAc...) asparagine glycosylation sites follow: asparagine 726 and asparagine 802. Cysteine 817 and cysteine 827 form a disulfide bridge. 3'-phosphoadenylyl sulfate is bound at residue 832 to 836 (KGRRY).

This sequence belongs to the sulfotransferase 1 family. NDST subfamily. As to quaternary structure, monomer. As to expression, widely expressed in adult and throughout development.

It localises to the golgi apparatus membrane. It carries out the reaction alpha-D-glucosaminyl-[heparan sulfate](n) + 3'-phosphoadenylyl sulfate = N-sulfo-alpha-D-glucosaminyl-[heparan sulfate](n) + adenosine 3',5'-bisphosphate + 2 H(+). It functions in the pathway glycan metabolism; heparan sulfate biosynthesis. The protein operates within glycan metabolism; heparin biosynthesis. Its function is as follows. Essential bifunctional enzyme that catalyzes both the N-deacetylation and the N-sulfation of glucosamine (GlcNAc) of the glycosaminoglycan in heparan sulfate. Modifies the GlcNAc-GlcA disaccharide repeating sugar backbone to make N-sulfated heparosan, a prerequisite substrate for later modifications in heparin biosynthesis. Plays a role in determining the extent and pattern of sulfation of heparan sulfate. Required for the exosomal release of SDCBP, CD63 and syndecan. In Mus musculus (Mouse), this protein is Bifunctional heparan sulfate N-deacetylase/N-sulfotransferase 2 (Ndst2).